The chain runs to 415 residues: Sucrose permease (415 aa).

At 1–16 (MALNIPFRNAYYRFAS) the chain is on the cytoplasmic side. The helical transmembrane segment at 17–37 (SYSFLFFISWSLWWSLYAIWL) threads the bilayer. At 38 to 48 (KGHLGLTGTEL) the chain is on the periplasmic side. A helical transmembrane segment spans residues 49–69 (GTLYSVNQFTSILFMMFYGIV). Over 70-77 (QDKLGLKK) the chain is Cytoplasmic. A helical membrane pass occupies residues 78–98 (PLIWCMSFILVLTGPFMIYVY). Topologically, residues 99-107 (EPLLQSNFS) are periplasmic. The helical transmembrane segment at 108 to 128 (VGLILGALFFGLGYLAGCGLL) threads the bilayer. At 129-147 (DSFTEKMARNFHFEYGTAR) the chain is on the cytoplasmic side. The helical transmembrane segment at 148 to 167 (AWGSFGYAIGAFFAGIFFSI) threads the bilayer. Topologically, residues 168–170 (SPH) are periplasmic. The helical transmembrane segment at 171–190 (INFWLVSLFGAVFMMINMRF) threads the bilayer. The Cytoplasmic segment spans residues 191 to 220 (KDKDHQCIAADAGGVKKEDFIAVFKDRNFW). A helical transmembrane segment spans residues 221 to 241 (VFVIFIVGTWSFYNIFDQQLF). Residues 242–260 (PVFYAGLFESHDVGTRLYG) lie on the Periplasmic side of the membrane. The helical transmembrane segment at 261–281 (YLNSFQVVLEALCMAIIPFFV) threads the bilayer. Residues 282 to 287 (NRVGPK) lie on the Cytoplasmic side of the membrane. The helical transmembrane segment at 288–308 (NALLIGVVIMALRILSCALFV) threads the bilayer. The Periplasmic segment spans residues 309 to 311 (NPW). The chain crosses the membrane as a helical span at residues 312-332 (IISLVKLLHAIEVPLCVISVF). Residues 333–342 (KYSVANFDKR) lie on the Cytoplasmic side of the membrane. Residues 343 to 363 (LSSTIFLIGFQIASSLGIVLL) traverse the membrane as a helical segment. Residues 364–377 (STPTGILFDHAGYQ) are Periplasmic-facing. Residues 378–398 (TVFFAISGIVCLMLLFGIFFL) traverse the membrane as a helical segment. Residues 399–415 (SKKREQIVMETPVPSAI) lie on the Cytoplasmic side of the membrane.

It belongs to the major facilitator superfamily. Oligosaccharide:H(+) symporter (OHS) (TC 2.A.1.5) family.

The protein localises to the cell inner membrane. The protein operates within glycan biosynthesis; sucrose metabolism. In terms of biological role, responsible for transport of sucrose into the cell, with the concomitant import of a proton (symport system). Can also transport maltose, fructose or lactulose, but not glucose, lactose or melibiose. The substrate specificity is directed toward the fructofuranosyl moiety of the substrate. In Escherichia coli, this protein is Sucrose permease.